The following is a 127-amino-acid chain: Competence protein ComGF (127 aa).

In terms of assembly, the transformation pili are flexible filaments, consisting mainly of the major pilin ComGC and smaller amounts of the minor pilins, including at least ComGD, ComGF and ComGG. Interacts with ComGD. Interacts with ComGG.

The protein resides in the cell membrane. It localises to the fimbrium. Functionally, required for formation of the type IV-like pilus (T4P) that plays a role in transformation. Involved in transformation. Transformation pili are dynamically extended and retracted, perhaps thereby promoting DNA uptake and transformation. Required for transformation and DNA binding. The polypeptide is Competence protein ComGF (comGF) (Bacillus subtilis (strain 168)).